Consider the following 316-residue polypeptide: 4-hydroxy-3-methylbut-2-enyl diphosphate reductase (316 aa).

Cys17 is a [4Fe-4S] cluster binding site. (2E)-4-hydroxy-3-methylbut-2-enyl diphosphate-binding residues include His46 and His79. Residues His46 and His79 each contribute to the dimethylallyl diphosphate site. The isopentenyl diphosphate site is built by His46 and His79. Cys101 is a [4Fe-4S] cluster binding site. His129 serves as a coordination point for (2E)-4-hydroxy-3-methylbut-2-enyl diphosphate. Residue His129 coordinates dimethylallyl diphosphate. His129 lines the isopentenyl diphosphate pocket. Glu131 acts as the Proton donor in catalysis. Residue Thr170 participates in (2E)-4-hydroxy-3-methylbut-2-enyl diphosphate binding. Cys200 contacts [4Fe-4S] cluster. (2E)-4-hydroxy-3-methylbut-2-enyl diphosphate is bound by residues Ser228, Ser229, Asn230, and Ser273. 4 residues coordinate dimethylallyl diphosphate: Ser228, Ser229, Asn230, and Ser273. Isopentenyl diphosphate-binding residues include Ser228, Ser229, Asn230, and Ser273.

Belongs to the IspH family. [4Fe-4S] cluster is required as a cofactor.

It catalyses the reaction isopentenyl diphosphate + 2 oxidized [2Fe-2S]-[ferredoxin] + H2O = (2E)-4-hydroxy-3-methylbut-2-enyl diphosphate + 2 reduced [2Fe-2S]-[ferredoxin] + 2 H(+). The catalysed reaction is dimethylallyl diphosphate + 2 oxidized [2Fe-2S]-[ferredoxin] + H2O = (2E)-4-hydroxy-3-methylbut-2-enyl diphosphate + 2 reduced [2Fe-2S]-[ferredoxin] + 2 H(+). Its pathway is isoprenoid biosynthesis; dimethylallyl diphosphate biosynthesis; dimethylallyl diphosphate from (2E)-4-hydroxy-3-methylbutenyl diphosphate: step 1/1. The protein operates within isoprenoid biosynthesis; isopentenyl diphosphate biosynthesis via DXP pathway; isopentenyl diphosphate from 1-deoxy-D-xylulose 5-phosphate: step 6/6. In terms of biological role, catalyzes the conversion of 1-hydroxy-2-methyl-2-(E)-butenyl 4-diphosphate (HMBPP) into a mixture of isopentenyl diphosphate (IPP) and dimethylallyl diphosphate (DMAPP). Acts in the terminal step of the DOXP/MEP pathway for isoprenoid precursor biosynthesis. The sequence is that of 4-hydroxy-3-methylbut-2-enyl diphosphate reductase from Ruegeria pomeroyi (strain ATCC 700808 / DSM 15171 / DSS-3) (Silicibacter pomeroyi).